Reading from the N-terminus, the 369-residue chain is MSKITLGNESIVGSLTPSNKKSYKVTNRIQEGKKPLYAVVFNFLDARFFDVFVTAGGNRITLYNCLGDGAISALQSYADEDKEESFYTVSWACGVNGNPYVAAGGVKGIIRVIDVNSETIHKSLVGHGDSVNEIRTQPLKPQLVITASKDESVRLWNVETGICILIFAGAGGHRYEVLSVDFHPSDIYRFASCGMDTTIKIWSMKEFWTYVEKSFTWTDDPSKFPTKFVQFPVFTASIHTNYVDCNRWFGDFILSKSVDNEILLWEPQLKENSPGEGASDVLLRYPVPMCDIWFIKFSCDLHLSSVAIGNQEGKVYVWDLKSCPPVLITKLSHNQSKSVIRQTAMSVDGSTILACCEDGTIWRWDVITK.

WD repeat units follow at residues Glu31–Ala73, Asp81–Ser123, Gly126–Ile166, Gly172–Glu212, Ile238–Gly275, Val287–Ile328, and Gln335–Thr368.

The protein belongs to the WD repeat ESC family. In terms of assembly, interacts directly with MEA. These two proteins are probably indirectly associated with FIS2. In plants, PcG complexes are probably composed of a member of the EZ family (CLF or MEA), FIE, and a member of the VEFS family (FIS2, VRN2 or EMF2). Component of the plant homeodomain / polycomb repressive complex 2 (PHD-PRC2) large complex during prolonged cold, composed of core PRC2 components (VRN2, EZA1, FIE and MSI1), and three related PHD finger proteins (VIL1, VIL2 and VIN3) that mediates histone H3 trimethylation on 'Lys-27' (H3K27me3). Binds to ALP1. Expressed in cauline leaves, root and stems. In the male reproductive organ, it is expressed in the developing anther; and is abundant in microspore mother cells, in microsporocytes and in the tapetum, but is absent from vascular bundles, the connective tissue and the filament. It is also absent from pollen grains at subsequent developmental stages. In the developing female reproductive organs, it is highly expressed in all cells of the young ovules primordium before archesporial differentiation. Then, it is highly expressed in the ovule sporophytic tissue and the megaspore mother cell before meiosis, but is absent from placenta or the developing carpel. Then, it decreases.

It localises to the nucleus. In terms of biological role, polycomb group (PcG) protein. PcG proteins act by forming multiprotein complexes, which are required to maintain the transcriptionally repressive state of homeotic genes throughout development. PcG proteins are not required to initiate repression, but to maintain it during later stages of development. They probably act via the methylation of histones, rendering chromatin heritably changed in its expressibility. Required to prevent the proliferation of the central cell by repressing unknown target genes before fertilization. Probably also involved in floral repression mechanism established during early plant development. Regulates the anteroposterior organization of the endosperm. Interacts with the promoter and represses the transcription of genes such as PHE1, that are paternally active and maternally silenced. This chain is Polycomb group protein FERTILIZATION-INDEPENDENT ENDOSPERM (FIE), found in Arabidopsis thaliana (Mouse-ear cress).